A 283-amino-acid polypeptide reads, in one-letter code: Homeobox protein Hox-A9a (283 aa).

Disordered stretches follow at residues 25–54 (VPRY…GTCS) and 162–181 (EKDA…EKPG). The segment at residues 216-275 (TRKKRCPYTKHQILELEKEFLFNTYLTRDRRYEVARLLNLTERQVKIWFQNRRMKMKKFN) is a DNA-binding region (homeobox).

This sequence belongs to the Abd-B homeobox family.

The protein resides in the nucleus. In terms of biological role, sequence-specific transcription factor which is part of a developmental regulatory system that provides cells with specific positional identities on the anterior-posterior axis. The sequence is that of Homeobox protein Hox-A9a (hoxa9a) from Takifugu rubripes (Japanese pufferfish).